Consider the following 323-residue polypeptide: Aldo-keto reductase family 1 member C13 (323 aa).

Residues 20 to 24 (GFGTY), D50, and Y55 each bind NAD(+). Y55 functions as the Proton donor in the catalytic mechanism. H117 provides a ligand contact to substrate. Residues 166-167 (SN), Q190, 216-224 (YGALGTQRY), and 270-280 (QSFKENEMREN) contribute to the NAD(+) site.

The protein belongs to the aldo/keto reductase family.

Its function is as follows. Catalyzes the dehydrogenation of 17-beta-hydroxysteroids. May also exhibit significant activity with a variety of cyclic and alicyclic alcohols. Uses both NAD and NADP, but the activity is much greater with NAD than with NADP. This chain is Aldo-keto reductase family 1 member C13 (Akr1c13), found in Mus musculus (Mouse).